The chain runs to 534 residues: Lysophosphatidylcholine acyltransferase 1 (534 aa).

The segment at 1 to 22 is disordered; sequence MRLRGCGPRAAPASSAGASDAR. At 1 to 57 the chain is on the cytoplasmic side; sequence MRLRGCGPRAAPASSAGASDARLLAPPGRNPFVHELRLSALQKAQVALMTLTLFPVR. Over residues 7–22 the composition is skewed to low complexity; that stretch reads GPRAAPASSAGASDAR. A helical; Signal-anchor for type II membrane protein transmembrane segment spans residues 58-78; that stretch reads LLVAAAMMLLAWPLALVASLG. The Lumenal portion of the chain corresponds to 79–534; sequence SAEKEPEQPP…GRKPVRKKLD (456 aa). Residues 135 to 140 carry the HXXXXD motif motif; the sequence is HSSYFD. 2 EF-hand domains span residues 379-414 and 451-486; these read PVSDLLEDMFSLFDESGSGEVDLRECVVALSVVCRP and VAELTVTDLFRAIDQEEKGKITFADFHRFAEMYPAF. Ca(2+) is bound by residues Asp-392, Ser-394, Ser-396, Glu-398, and Glu-403. Residues 512–534 form a disordered region; that stretch reads GFCADFSPENSDAGRKPVRKKLD. A compositionally biased stretch (basic and acidic residues) spans 523 to 534; the sequence is DAGRKPVRKKLD. The short motif at 531 to 534 is the Di-lysine motif element; the sequence is KKLD.

Belongs to the 1-acyl-sn-glycerol-3-phosphate acyltransferase family. In terms of tissue distribution, erythrocytes.

The protein resides in the endoplasmic reticulum membrane. Its subcellular location is the golgi apparatus membrane. It localises to the cell membrane. The protein localises to the lipid droplet. It catalyses the reaction a 1-acyl-sn-glycero-3-phosphocholine + an acyl-CoA = a 1,2-diacyl-sn-glycero-3-phosphocholine + CoA. The catalysed reaction is a 1-acyl-sn-glycero-3-phosphate + an acyl-CoA = a 1,2-diacyl-sn-glycero-3-phosphate + CoA. It carries out the reaction a 1-O-alkyl-sn-glycero-3-phosphocholine + acetyl-CoA = a 1-O-alkyl-2-acetyl-sn-glycero-3-phosphocholine + CoA. The enzyme catalyses a 1-O-(1Z-alkenyl)-sn-glycero-3-phosphocholine + an acyl-CoA = a 1-O-(1Z-alkenyl)-2-acyl-sn-glycero-3-phosphocholine + CoA. It catalyses the reaction 1-acyl-sn-glycero-3-phospho-(1'-sn-glycerol) + an acyl-CoA = a 1,2-diacyl-sn-glycero-3-phospho-(1'-sn-glycerol) + CoA. The catalysed reaction is 1-hexadecanoyl-sn-glycero-3-phosphocholine + (9Z)-octadecenoyl-CoA = 1-hexadecanoyl-2-(9Z-octadecenoyl)-sn-glycero-3-phosphocholine + CoA. It carries out the reaction 1-hexadecanoyl-sn-glycero-3-phosphocholine + hexadecanoyl-CoA = 1,2-dihexadecanoyl-sn-glycero-3-phosphocholine + CoA. The enzyme catalyses 1-O-hexadecyl-sn-glycero-3-phosphocholine + hexadecanoyl-CoA = 1-O-hexadecyl-2-hexadecanoyl-sn-glycero-3-phosphocholine + CoA. It catalyses the reaction a 1-O-(1Z-alkenyl)-sn-glycero-3-phosphocholine + hexadecanoyl-CoA = 1-O-(1Z)-alkenyl-2-hexadecanoyl-sn-glycero-3-phosphocholine + CoA. The catalysed reaction is 1-hexadecanoyl-sn-glycero-3-phospho-(1'-sn-glycerol) + hexadecanoyl-CoA = 1,2-dihexadecanoyl-sn-glycero-3-phospho-(1'-sn-glycerol) + CoA. It carries out the reaction 1-dodecanoyl-sn-glycero-3-phosphocholine + hexadecanoyl-CoA = 1-dodecanoyl-2-hexadecanoyl-sn-glycero-3-phosphocholine + CoA. The enzyme catalyses 1-tetradecanoyl-sn-glycero-3-phosphocholine + hexadecanoyl-CoA = 1-tetradecanoyl-2-hexadecanoyl-sn-glycero-3-phosphocholine + CoA. It catalyses the reaction 1-O-octadecyl-sn-glycero-3-phosphocholine + hexadecanoyl-CoA = 1-O-octadecyl-2-hexadecanoyl-sn-glycero-3-phosphocholine + CoA. The catalysed reaction is 1-octadecanoyl-sn-glycero-3-phosphocholine + hexadecanoyl-CoA = 1-octadecanoyl-2-hexadecanoyl-sn-glycero-3-phosphocholine + CoA. It carries out the reaction 1-(9Z-octadecenoyl)-sn-glycero-3-phosphocholine + hexadecanoyl-CoA = 1-(9Z-octadecenoyl)-2-hexadecanoyl-sn-glycero-3-phosphocholine + CoA. The enzyme catalyses 1-eicosanoyl-sn-glycero-3-phosphocholine + hexadecanoyl-CoA = 1-eicosanoyl-2-hexadecanoyl-sn-glycero-3-phosphocholine + CoA. It catalyses the reaction hexanoyl-CoA + 1-hexadecanoyl-sn-glycero-3-phosphocholine = 1-hexadecanoyl-2-hexanoyl-sn-glycero-3-phosphocholine + CoA. The catalysed reaction is octanoyl-CoA + 1-hexadecanoyl-sn-glycero-3-phosphocholine = 1-hexadecanoyl-2-octanoyl-sn-glycero-3-phosphocholine + CoA. It carries out the reaction decanoyl-CoA + 1-hexadecanoyl-sn-glycero-3-phosphocholine = 1-hexadecanoyl-2-decanoyl-sn-glycero-3-phosphocholine + CoA. The enzyme catalyses dodecanoyl-CoA + 1-hexadecanoyl-sn-glycero-3-phosphocholine = 1-hexadecanoyl-2-dodecanoyl-sn-glycero-3-phosphocholine + CoA. It catalyses the reaction tetradecanoyl-CoA + 1-hexadecanoyl-sn-glycero-3-phosphocholine = 1-hexadecanoyl-2-tetradecanoyl-sn-glycero-3-phosphocholine + CoA. The catalysed reaction is (9Z,12Z)-octadecadienoyl-CoA + 1-hexadecanoyl-sn-glycero-3-phosphocholine = 1-hexadecanoyl-2-(9Z,12Z-octadecadienoyl)-sn-glycero-3-phosphocholine + CoA. It carries out the reaction (4Z,7Z,10Z,13Z,16Z,19Z)-docosahexaenoyl-CoA + 1-hexadecanoyl-sn-glycero-3-phosphocholine = 1-hexadecanoyl-2-(4Z,7Z,10Z,13Z,16Z,19Z-docosahexaenoyl)-sn-glycero-3-phosphocholine + CoA. The enzyme catalyses 1-hexadecanoyl-sn-glycero-3-phosphocholine + acetyl-CoA = 1-hexadecanoyl-2-acetyl-sn-glycero-3-phosphocholine + CoA. It catalyses the reaction eicosanoyl-CoA + 1-hexadecanoyl-sn-glycero-3-phosphocholine = 1-hexadecanoyl-2-eicosanoyl-sn-glycero-3-phosphocholine + CoA. The catalysed reaction is 1-O-hexadecyl-sn-glycero-3-phosphocholine + acetyl-CoA = 1-O-hexadecyl-2-acetyl-sn-glycero-3-phosphocholine + CoA. It carries out the reaction a 1-acyl-sn-glycero-3-phosphocholine + hexadecanoyl-CoA = 1-acyl-2-hexadecanoyl-sn-glycero-3-phosphocholine + CoA. The enzyme catalyses a 1-acyl-sn-glycero-3-phosphate + hexadecanoyl-CoA = 1-acyl-2-hexadecanoyl-sn-glycero-3-phosphate + CoA. It catalyses the reaction 1-acyl-sn-glycero-3-phospho-(1'-sn-glycerol) + hexadecanoyl-CoA = 1-acyl-2-hexadecanoyl-sn-glycero-3-phospho-(1'-sn-glycerol) + CoA. The protein operates within lipid metabolism; phospholipid metabolism. Exhibits acyltransferase activity. Exhibits acetyltransferase activity. Activity is calcium-independent. Catalyzes the conversion of lysophosphatidylcholine (1-acyl-sn-glycero-3-phosphocholine or LPC) into phosphatidylcholine (1,2-diacyl-sn-glycero-3-phosphocholine or PC). Catalyzes the conversion 1-acyl-sn-glycerol-3-phosphate (lysophosphatidic acid or LPA) into 1,2-diacyl-sn-glycerol-3-phosphate (phosphatidic acid or PA) by incorporating an acyl moiety at the sn-2 position of the glycerol backbone. Displays a clear preference for saturated fatty acyl-CoAs, and 1-myristoyl or 1-palmitoyl LPC as acyl donors and acceptors, respectively. Involved in platelet-activating factor (PAF) biosynthesis by catalyzing the conversion of the PAF precursor, 1-O-alkyl-sn-glycero-3-phosphocholine (lyso-PAF) into 1-O-alkyl-2-acetyl-sn-glycero-3-phosphocholine (PAF). May synthesize phosphatidylcholine in pulmonary surfactant, thereby playing a pivotal role in respiratory physiology. Involved in the regulation of lipid droplet number and size. The sequence is that of Lysophosphatidylcholine acyltransferase 1 (LPCAT1) from Homo sapiens (Human).